The primary structure comprises 103 residues: Glycoprotein 24B (103 aa).

It belongs to the csb family. O-glycosylated.

The protein localises to the cell surface. Functionally, cell-cell adhesion during early development. The protein is Glycoprotein 24B (csbB) of Dictyostelium discoideum (Social amoeba).